The sequence spans 598 residues: Transcription factor dpl-1 (598 aa).

Disordered stretches follow at residues 1 to 73 (MNPT…PTGL), 435 to 457 (NRPY…VNSG), and 573 to 598 (TEQP…DYFQ). A compositionally biased stretch (polar residues) spans 13–22 (PAQSRPQVSL). Gly residues predominate over residues 55–64 (GVGGSSGAGG).

It belongs to the E2F/DP family. In terms of assembly, component of the DRM complex, at least composed of lin-9, lin-35, lin-37, lin-52, lin-53, lin-54- dpl-1 and efl-1. Interacts (via N-terminus) with efl-1. Interacts (via C-terminus) with lin-35 (via C-terminus).

It is found in the nucleus. In terms of biological role, synthetic multivulva class B (synMuvB) protein. SynMuvB proteins are required to repress the induction of vulval development by Ras signaling and probably act by forming the multiprotein DRM complex that represses transcription. May also negatively regulate vulval development in association with other SynMuv class B proteins such as lin-15A. Can stimulate E2F-dependent transcription. Plays a role in negatively regulating the progression through the G1 phase of the cell cycle during postembryonic development, most likely by acting as a transcriptional repressor in association with the cell cycle regulatory factor efl-1 and the transcriptional repressor lin-35, but may also act as a positive regulator of cell cycle entry. Involved in the regulation of intestinal cell division during postembryonic development, most likely in complex with efl-1 and lin-35. Promotes germ cell programmed cell death, probably together with efl-1, by positively regulating the expression of the apoptosis proteins ced-3 and ced-4. In particular, positively regulates the expression of ced-4 in response to starvation. Its role in programmed cell death may be in conjunction with cell cycle regulatory factor efl-1 and the synthetic multivulva class B proteins lin-35, lin-37 and lin-52, and is independent of the ced-1, ced-8 and ced-9 pathways. This Caenorhabditis elegans protein is Transcription factor dpl-1.